Consider the following 224-residue polypeptide: Pyridoxal 5'-phosphate synthase subunit PdxT (224 aa).

Position 55 to 57 (55 to 57 (GES)) interacts with L-glutamine. Cys87 acts as the Nucleophile in catalysis. Residues Arg113 and 142-143 (IR) each bind L-glutamine. Catalysis depends on charge relay system residues His178 and Glu180.

The protein belongs to the glutaminase PdxT/SNO family. In the presence of PdxS, forms a dodecamer of heterodimers. Only shows activity in the heterodimer.

The catalysed reaction is aldehydo-D-ribose 5-phosphate + D-glyceraldehyde 3-phosphate + L-glutamine = pyridoxal 5'-phosphate + L-glutamate + phosphate + 3 H2O + H(+). It catalyses the reaction L-glutamine + H2O = L-glutamate + NH4(+). It participates in cofactor biosynthesis; pyridoxal 5'-phosphate biosynthesis. Its function is as follows. Catalyzes the hydrolysis of glutamine to glutamate and ammonia as part of the biosynthesis of pyridoxal 5'-phosphate. The resulting ammonia molecule is channeled to the active site of PdxS. The protein is Pyridoxal 5'-phosphate synthase subunit PdxT of Syntrophus aciditrophicus (strain SB).